The primary structure comprises 317 residues: uncharacterized protein (317 aa).

The next 7 membrane-spanning stretches (helical) occupy residues 18–38, 58–78, 92–112, 130–150, 165–185, 202–222, and 253–273; these read WWIISLVVAFLPLGLHGLIII, IIFGWLLFFFWFNIVVNGFIF, FLGHFIYSGGEQFGGVSWWSV, LFATSFLLTASTSIYELAFGV, QPLSILFALVFKLLPIVKGEL, LAFLNPVKLKTLFIPVLLSTV, and LWGGIVFLGLFVLLSCLLMVN.

This sequence belongs to the CbiQ family.

The protein localises to the cell membrane. This is an uncharacterized protein from Mycoplasma pneumoniae (strain ATCC 29342 / M129 / Subtype 1) (Mycoplasmoides pneumoniae).